The primary structure comprises 308 residues: MKFLWAALVVTLLAGCRADVEEEVKLGQEPDRWQAKQPWEQALGRFWEYLRWVQTLSNKVKEELLNSQVTEELKLLIEETMKEVKAYKEELEKQVGPIAQETQARLSKELQAAQARLESDMEDVRTRLAQYRSEAQAALGQNTDDLQGRLASHLRKLRKRLLRDAEDLQKRLAVYQAGTHEAAERGVSAIHERLGPLMMEGPLQAIPPSQQLRERAEAWGQKVRGRLESVGSQARDRLDDMRDQMEELKAKVEEQASQVRLQAEAFQTRLKSWFEPLVQDMQRQWASLVEKVQSTLGISPSTKPSKTK.

A signal peptide spans methionine 1–alanine 18. 8 tandem repeats follow at residues leucine 75–glycine 96, proline 97–glutamate 118, serine 119–glycine 140, glutamine 141–leucine 162, arginine 163–glutamate 184, arginine 185–isoleucine 206, proline 207–arginine 224, and glycine 225–glutamate 246. The segment at leucine 75–glutamate 246 is 8 X 22 AA approximate tandem repeats. An LDL and other lipoprotein receptors binding region spans residues histidine 153–arginine 163. A heparin-binding site is contributed by leucine 157–arginine 160. A lipid-binding and lipoprotein association region spans residues alanine 205–methionine 281. Glycine 220–leucine 227 contacts heparin. The homooligomerization stretch occupies residues serine 257–lysine 308. Residues arginine 269 to methionine 281 form a specificity for association with VLDL region.

It belongs to the apolipoprotein A1/A4/E family. Homotetramer. May interact with ABCA1; functionally associated with ABCA1 in the biogenesis of HDLs. May interact with APP/A4 amyloid-beta peptide; the interaction is extremely stable in vitro but its physiological significance is unclear. May interact with MAPT. May interact with MAP2. In the cerebrospinal fluid, interacts with secreted SORL1. Interacts with PMEL; this allows the loading of PMEL luminal fragment on ILVs to induce fibril nucleation. Post-translationally, APOE exists as multiple glycosylated and sialylated glycoforms within cells and in plasma. The extent of glycosylation and sialylation are tissue and context specific. In terms of processing, glycated in plasma VLDL. Phosphorylated by FAM20C in the extracellular medium.

Its subcellular location is the secreted. It is found in the extracellular space. It localises to the extracellular matrix. The protein localises to the extracellular vesicle. The protein resides in the endosome. Its subcellular location is the multivesicular body. Functionally, APOE is an apolipoprotein, a protein associating with lipid particles, that mainly functions in lipoprotein-mediated lipid transport between organs via the plasma and interstitial fluids. APOE is a core component of plasma lipoproteins and is involved in their production, conversion and clearance. Apolipoproteins are amphipathic molecules that interact both with lipids of the lipoprotein particle core and the aqueous environment of the plasma. As such, APOE associates with chylomicrons, chylomicron remnants, very low density lipoproteins (VLDL) and intermediate density lipoproteins (IDL) but shows a preferential binding to high-density lipoproteins (HDL). It also binds a wide range of cellular receptors including the LDL receptor/LDLR and the very low-density lipoprotein receptor/VLDLR that mediate the cellular uptake of the APOE-containing lipoprotein particles. Finally, APOE also has a heparin-binding activity and binds heparan-sulfate proteoglycans on the surface of cells, a property that supports the capture and the receptor-mediated uptake of APOE-containing lipoproteins by cells. The protein is Apolipoprotein E (APOE) of Pteropus pselaphon (Bonin flying fox).